A 506-amino-acid polypeptide reads, in one-letter code: Cytochrome P450 71B8 (506 aa).

A helical membrane pass occupies residues 5 to 25 (ILLCFFFLFPLLLTLFKKLLP). Heme is bound at residue Cys443.

This sequence belongs to the cytochrome P450 family. It depends on heme as a cofactor.

Its subcellular location is the membrane. The sequence is that of Cytochrome P450 71B8 (CYP71B8) from Arabidopsis thaliana (Mouse-ear cress).